Consider the following 523-residue polypeptide: Maintenance of mitochondrial morphology protein 1 (523 aa).

The Lumenal portion of the chain corresponds to 1–43 (MAGSTSASLQTPYFPSSTQINPVRVDHTLPLPPAQPSLSFTQG). The helical transmembrane segment at 44–64 (LLVGQLSVVLLIGAFIKFFIF) threads the bilayer. The Cytoplasmic portion of the chain corresponds to 65–523 (GEAPPPPSRG…GSMPDTVTET (459 aa)). 4 disordered regions span residues 70–118 (PPSR…SSST), 295–349 (TSDQ…SKHG), 420–473 (RTGL…IDRG), and 492–523 (GGHQ…VTET). Composition is skewed to polar residues over residues 74 to 96 (GLSN…TDSS), 105 to 118 (STSN…SSST), and 295 to 312 (TSDQ…TTSE). In terms of domain architecture, SMP-LTD spans 151–412 (QPESLDWFNV…EPRVQVVGLP (262 aa)). Residues 449–467 (GVSGGGGSGGGSGGGGGSM) show a composition bias toward gly residues.

It belongs to the MMM1 family. As to quaternary structure, homodimer. Component of the ER-mitochondria encounter structure (ERMES) or MDM complex, composed of MMM1, MDM10, MDM12 and MDM34. An MMM1 homodimer associates with one molecule of MDM12 on each side in a pairwise head-to-tail manner, and the SMP-LTD domains of MMM1 and MDM12 generate a continuous hydrophobic tunnel for phospholipid trafficking.

Its subcellular location is the endoplasmic reticulum membrane. Component of the ERMES/MDM complex, which serves as a molecular tether to connect the endoplasmic reticulum (ER) and mitochondria. Components of this complex are involved in the control of mitochondrial shape and protein biogenesis, and function in nonvesicular lipid trafficking between the ER and mitochondria. The MDM12-MMM1 subcomplex functions in the major beta-barrel assembly pathway that is responsible for biogenesis of all outer membrane beta-barrel proteins, and acts in a late step after the SAM complex. The MDM10-MDM12-MMM1 subcomplex further acts in the TOM40-specific pathway after the action of the MDM12-MMM1 complex. Essential for establishing and maintaining the structure of mitochondria and maintenance of mtDNA nucleoids. The polypeptide is Maintenance of mitochondrial morphology protein 1 (Paracoccidioides brasiliensis (strain Pb03)).